Consider the following 389-residue polypeptide: Probable serine/threonine-protein kinase PBL11 (389 aa).

A lipid anchor (N-myristoyl glycine) is attached at Gly2. Cys4 is lipidated: S-palmitoyl cysteine. The 286-residue stretch at 68–353 (FRPDSVVGEG…NEIVKTMEEL (286 aa)) folds into the Protein kinase domain. ATP-binding positions include 74–82 (VGEGGFGCV) and Lys106. Tyr151 is modified (phosphotyrosine). Residue Asp203 is the Proton acceptor of the active site. A phosphoserine mark is found at Ser207 and Ser237. Phosphothreonine occurs at positions 238 and 243. Tyr251 carries the phosphotyrosine modification.

It belongs to the protein kinase superfamily. Ser/Thr protein kinase family. As to expression, roots, leaves and stems.

It localises to the cell membrane. The catalysed reaction is L-seryl-[protein] + ATP = O-phospho-L-seryl-[protein] + ADP + H(+). The enzyme catalyses L-threonyl-[protein] + ATP = O-phospho-L-threonyl-[protein] + ADP + H(+). Its function is as follows. May play a role in the regulation of plant growth and development. May be involved in plant defense signaling. In Arabidopsis thaliana (Mouse-ear cress), this protein is Probable serine/threonine-protein kinase PBL11.